The chain runs to 208 residues: Transmembrane emp24 domain-containing protein p24beta2 (208 aa).

An N-terminal signal peptide occupies residues 1 to 21 (MSLKGTIVLLGLLWSFQATLG). Residues 22 to 176 (IRFVIDREEC…ENMSKRAVHK (155 aa)) are Lumenal-facing. Positions 29–116 (EECFSHKAEY…HETIDFDVQL (88 aa)) constitute a GOLD domain. Residues 134–149 (LMEQISKLEEALYNIQ) are a coiled coil. N-linked (GlcNAc...) asparagine glycosylation is present at Asn168. Residues 177–195 (ALFESFALIGASFLQVYLL) traverse the membrane as a helical segment. Topologically, residues 196-208 (RRLFERKLGMSRV) are cytoplasmic. Residues 198-199 (LF) carry the COPII vesicle coat-binding motif. Positions 198 to 208 (LFERKLGMSRV) match the COPI vesicle coat-binding motif. The Required for the export from the endoplasmic reticulum to the Golgi motif lies at 207-208 (RV).

The protein belongs to the EMP24/GP25L family. Probably oligomerizes with other members of the EMP24/GP25L family. Associates with the COPI vesicle coat (coatomer). Associates with the COPII vesicle coat (coatomer). Interacts with p24delta5.

Its subcellular location is the golgi apparatus. The protein localises to the cis-Golgi network membrane. The protein resides in the golgi stack membrane. In terms of biological role, involved in vesicular protein trafficking. Mainly functions in the early secretory pathway but also in post-Golgi membranes. Thought to act as cargo receptor at the lumenal side for incorporation of secretory cargo molecules into transport vesicles and to be involved in vesicle coat formation at the cytoplasmic side. Interacts with p24delta5 at endoplasmic reticulum export sites for endoplasmic reticulum exit and coupled transport to the Golgi apparatus. The chain is Transmembrane emp24 domain-containing protein p24beta2 from Arabidopsis thaliana (Mouse-ear cress).